We begin with the raw amino-acid sequence, 415 residues long: Peptide chain release factor subunit 1 (415 aa).

It belongs to the eukaryotic release factor 1 family. In terms of assembly, heterodimer of two subunits, one of which binds GTP.

Its subcellular location is the cytoplasm. Its function is as follows. Directs the termination of nascent peptide synthesis (translation) in response to the termination codons UAA, UAG and UGA. The sequence is that of Peptide chain release factor subunit 1 from Thermococcus onnurineus (strain NA1).